The following is a 60-amino-acid chain: Cytotoxin 1 (60 aa).

Disulfide bonds link C3-C21, C14-C38, C42-C53, and C54-C59.

This sequence belongs to the three-finger toxin family. Short-chain subfamily. Type IA cytotoxin sub-subfamily. Monomer in solution; Homodimer and oligomer in the presence of negatively charged lipids forming a pore with a size ranging between 20 and 30 Angstroms. In terms of tissue distribution, expressed by the venom gland.

The protein resides in the secreted. The protein localises to the target cell membrane. Its function is as follows. Shows cytolytic activity on many different cells by forming pore in lipid membranes. In vivo, increases heart rate or kills the animal by cardiac arrest. In addition, it binds to heparin with high affinity, interacts with Kv channel-interacting protein 1 (KCNIP1) in a calcium-independent manner, and binds to integrin alpha-V/beta-3 (ITGAV/ITGB3) with moderate affinity. The protein is Cytotoxin 1 of Naja nivea (Cape cobra).